A 485-amino-acid polypeptide reads, in one-letter code: Membrane-bound lytic murein transglycosylase F (485 aa).

A signal peptide spans 1 to 29; that stretch reads MFAHTALRQRCAKWLFATGLFLLLGACVE. Residues 30–267 are non-LT domain; sequence KPSTLERVKE…RLKDRYYGHV (238 aa). Residues 268 to 485 form an LT domain region; that stretch reads DVLGYVGAYT…DKPAEQSPPM (218 aa). Glu314 is an active-site residue. A disordered region spans residues 465-485; sequence EGNLHVPGVNKDKPAEQSPPM.

In the N-terminal section; belongs to the bacterial solute-binding protein 3 family. It in the C-terminal section; belongs to the transglycosylase Slt family.

Its subcellular location is the cell outer membrane. It catalyses the reaction Exolytic cleavage of the (1-&gt;4)-beta-glycosidic linkage between N-acetylmuramic acid (MurNAc) and N-acetylglucosamine (GlcNAc) residues in peptidoglycan, from either the reducing or the non-reducing ends of the peptidoglycan chains, with concomitant formation of a 1,6-anhydrobond in the MurNAc residue.. Functionally, murein-degrading enzyme that degrades murein glycan strands and insoluble, high-molecular weight murein sacculi, with the concomitant formation of a 1,6-anhydromuramoyl product. Lytic transglycosylases (LTs) play an integral role in the metabolism of the peptidoglycan (PG) sacculus. Their lytic action creates space within the PG sacculus to allow for its expansion as well as for the insertion of various structures such as secretion systems and flagella. This chain is Membrane-bound lytic murein transglycosylase F, found in Pseudomonas putida (strain W619).